Consider the following 685-residue polypeptide: Dammaradiene synthase (685 aa).

PFTB repeat units follow at residues 82–123 and 265–308; these read MDKM…RLLN and IREA…DPVV. The active-site Proton donor is the Asp-400. 2 PFTB repeats span residues 424-465 and 621-672; these read ITRC…KAMV and IGHG…ARYR.

Belongs to the terpene cyclase/mutase family.

The catalysed reaction is squalene = dammara-20,24-diene. In terms of biological role, squalene cyclase producing the tetracyclic triterpene dammaradiene. The polypeptide is Dammaradiene synthase (DCD) (Dryopteris crassirhizoma (Thick stemmed wood fern)).